A 294-amino-acid polypeptide reads, in one-letter code: 4-hydroxy-tetrahydrodipicolinate synthase (294 aa).

Residue Thr-49 coordinates pyruvate. Tyr-136 (proton donor/acceptor) is an active-site residue. The Schiff-base intermediate with substrate role is filled by Lys-164. Ile-207 contributes to the pyruvate binding site.

It belongs to the DapA family. In terms of assembly, homotetramer; dimer of dimers.

The protein resides in the cytoplasm. The enzyme catalyses L-aspartate 4-semialdehyde + pyruvate = (2S,4S)-4-hydroxy-2,3,4,5-tetrahydrodipicolinate + H2O + H(+). The protein operates within amino-acid biosynthesis; L-lysine biosynthesis via DAP pathway; (S)-tetrahydrodipicolinate from L-aspartate: step 3/4. Catalyzes the condensation of (S)-aspartate-beta-semialdehyde [(S)-ASA] and pyruvate to 4-hydroxy-tetrahydrodipicolinate (HTPA). The polypeptide is 4-hydroxy-tetrahydrodipicolinate synthase (Natronomonas pharaonis (strain ATCC 35678 / DSM 2160 / CIP 103997 / JCM 8858 / NBRC 14720 / NCIMB 2260 / Gabara) (Halobacterium pharaonis)).